The chain runs to 293 residues: Bifunctional protein FolD (293 aa).

NADP(+) contacts are provided by residues 165 to 167 (GRG), Thr192, and Val233.

This sequence belongs to the tetrahydrofolate dehydrogenase/cyclohydrolase family. As to quaternary structure, homodimer.

The catalysed reaction is (6R)-5,10-methylene-5,6,7,8-tetrahydrofolate + NADP(+) = (6R)-5,10-methenyltetrahydrofolate + NADPH. It catalyses the reaction (6R)-5,10-methenyltetrahydrofolate + H2O = (6R)-10-formyltetrahydrofolate + H(+). The protein operates within one-carbon metabolism; tetrahydrofolate interconversion. Its function is as follows. Catalyzes the oxidation of 5,10-methylenetetrahydrofolate to 5,10-methenyltetrahydrofolate and then the hydrolysis of 5,10-methenyltetrahydrofolate to 10-formyltetrahydrofolate. This Streptomyces griseus subsp. griseus (strain JCM 4626 / CBS 651.72 / NBRC 13350 / KCC S-0626 / ISP 5235) protein is Bifunctional protein FolD.